Here is a 132-residue protein sequence, read N- to C-terminus: Chemokine-like protein TAFA-5 (132 aa).

The first 43 residues, 1–43, serve as a signal peptide directing secretion; that stretch reads MAPSPRTGSRQDATALPSMSSTFWAFMILASLLIAYCSQLAAG. N-linked (GlcNAc...) asparagine glycosylation is present at Asn113.

Belongs to the TAFA family.

It localises to the secreted. Its function is as follows. Acts as a chemokine-like protein by regulating cell proliferation and migration through activation of G protein-coupled receptors (GPCRs), such as S1PR2 and FPR2. Stimulates chemotactic migration of macrophages mediated by the MAPK3/ERK1 and AKT1 pathway. Blocks TNFSF11/RANKL-induced osteoclast formation from macrophages by inhibiting up-regulation of osteoclast fusogenic and differentiation genes. Stimulation of macrophage migration and inhibition of osteoclast formation is mediated through the GPCR FPR2. Acts as an adipokine by negatively regulating vascular smooth muscle cell (VSMC) proliferation and migration in response to platelet-derived growth factor stimulation via GPCR S1PR2 and G protein GNA12/GNA13-transmitted RHOA signaling. Inhibits injury-induced cell proliferation and neointima formation in the femoral arteries. In Bos taurus (Bovine), this protein is Chemokine-like protein TAFA-5 (TAFA5).